Consider the following 105-residue polypeptide: Large ribosomal subunit protein bL34m (105 aa).

A mitochondrion-targeting transit peptide spans 1–16 (MPLFARLCQPQSRRMF).

Belongs to the bacterial ribosomal protein bL34 family. In terms of assembly, component of the mitochondrial large ribosomal subunit (mt-LSU). Mature yeast 74S mitochondrial ribosomes consist of a small (37S) and a large (54S) subunit. The 37S small subunit contains a 15S ribosomal RNA (15S mt-rRNA) and 34 different proteins. The 54S large subunit contains a 21S rRNA (21S mt-rRNA) and 46 different proteins.

The protein localises to the mitochondrion. Component of the mitochondrial ribosome (mitoribosome), a dedicated translation machinery responsible for the synthesis of mitochondrial genome-encoded proteins, including at least some of the essential transmembrane subunits of the mitochondrial respiratory chain. The mitoribosomes are attached to the mitochondrial inner membrane and translation products are cotranslationally integrated into the membrane. In Saccharomyces cerevisiae (strain ATCC 204508 / S288c) (Baker's yeast), this protein is Large ribosomal subunit protein bL34m.